The sequence spans 285 residues: Probable methyltransferase ltbC (285 aa).

Residues 1–22 are disordered; the sequence is MASTGQTNNYKQGYSSQTVETQ.

Belongs to the class I-like SAM-binding methyltransferase superfamily. As to quaternary structure, monomer.

In terms of biological role, probable methyltransferase; part of the gene cluster that mediates the biosynthesis of luteodienoside A, a glycosylated polyketide consisting of an unusual 1-O-beta-D-glucopyranosyl-myo-inositol (glucinol) ester of 3-hydroxy-2,2,4-trimethylocta-4,6-dienoic acid. The HR-PKS ltbA produces the trimethylated polyketide chain from acetyl-CoA, malonyl-CoA and S-adenosylmethionine (SAM), and the ltbA cAT domain then uses glucinol produced by the glycosyltransferase ltbB as an offloading substrate to release luteodienoside A. Since ltbA and ltbB are sufficient for the biosynthesis of luteodienoside A, the functions of the methyltransferase ltbC and the FAD-binding monooxygenase ltbD within the pathway remain obscur. The polypeptide is Probable methyltransferase ltbC (Aspergillus luteorubrus).